The following is an 817-amino-acid chain: Lon protease (817 aa).

The region spanning 22-216 is the Lon N-terminal domain; it reads VPIMPLSDGV…KVTRQLNHQL (195 aa). Residue 368–375 coordinates ATP; sequence GPPGTGKT. One can recognise a Lon proteolytic domain in the interval 604-785; sequence ALTPGVVMGL…GDVLELALNG (182 aa). Catalysis depends on residues Ser691 and Lys734. The disordered stretch occupies residues 784–817; the sequence is NGNGATKKKKKTPAKSKKSTKPAAKKTAARKSRK. Over residues 789–817 the composition is skewed to basic residues; the sequence is TKKKKKTPAKSKKSTKPAAKKTAARKSRK.

This sequence belongs to the peptidase S16 family. As to quaternary structure, homohexamer. Organized in a ring with a central cavity.

The protein localises to the cytoplasm. It carries out the reaction Hydrolysis of proteins in presence of ATP.. Its function is as follows. ATP-dependent serine protease that mediates the selective degradation of mutant and abnormal proteins as well as certain short-lived regulatory proteins. Required for cellular homeostasis and for survival from DNA damage and developmental changes induced by stress. Degrades polypeptides processively to yield small peptide fragments that are 5 to 10 amino acids long. Binds to DNA in a double-stranded, site-specific manner. The polypeptide is Lon protease (Desulfosudis oleivorans (strain DSM 6200 / JCM 39069 / Hxd3) (Desulfococcus oleovorans)).